A 361-amino-acid chain; its full sequence is POU domain, class 3, transcription factor 4 (361 aa).

Disordered stretches follow at residues 99–131 and 144–192; these read PHVA…GQPL and MLEH…PTSD. A compositionally biased stretch (polar residues) spans 119–131; the sequence is APNSSITSSGQPL. Basic and acidic residues predominate over residues 165-183; it reads VLREPPDHGELGSHHCQDH. The POU-specific domain maps to 186–260; sequence EETPTSDELE…LLNKWLEEAD (75 aa). Ser265 is modified (phosphoserine). Residues 278–337 constitute a DNA-binding region (homeobox); it reads KRKKRTSIEVSVKGVLETHFLKCPKPAAQEISSLADSLQLEKEVVRVWFCNRRQKEKRMT. The disordered stretch occupies residues 334-361; that stretch reads KRMTPPGDQQPHEVYSHTVKTDASCHDL. The segment covering 343-361 has biased composition (basic and acidic residues); it reads QPHEVYSHTVKTDASCHDL.

It belongs to the POU transcription factor family. Class-3 subfamily. In terms of assembly, interacts with HNRNPU. Brain specific.

It localises to the nucleus. In terms of biological role, probable transcription factor which exert its primary action widely during early neural development and in a very limited set of neurons in the mature brain. The protein is POU domain, class 3, transcription factor 4 (Pou3f4) of Mus musculus (Mouse).